A 291-amino-acid polypeptide reads, in one-letter code: 4-hydroxy-tetrahydrodipicolinate synthase (291 aa).

Thr-44 contributes to the pyruvate binding site. Catalysis depends on Tyr-132, which acts as the Proton donor/acceptor. The active-site Schiff-base intermediate with substrate is Lys-160. Pyruvate is bound at residue Ile-202.

It belongs to the DapA family. As to quaternary structure, homotetramer; dimer of dimers.

It is found in the cytoplasm. The catalysed reaction is L-aspartate 4-semialdehyde + pyruvate = (2S,4S)-4-hydroxy-2,3,4,5-tetrahydrodipicolinate + H2O + H(+). It functions in the pathway amino-acid biosynthesis; L-lysine biosynthesis via DAP pathway; (S)-tetrahydrodipicolinate from L-aspartate: step 3/4. Its function is as follows. Catalyzes the condensation of (S)-aspartate-beta-semialdehyde [(S)-ASA] and pyruvate to 4-hydroxy-tetrahydrodipicolinate (HTPA). This is 4-hydroxy-tetrahydrodipicolinate synthase from Syntrophobacter fumaroxidans (strain DSM 10017 / MPOB).